Here is a 1342-residue protein sequence, read N- to C-terminus: DNA-directed RNA polymerase subunit beta (1342 aa).

Belongs to the RNA polymerase beta chain family. As to quaternary structure, the RNAP catalytic core consists of 2 alpha, 1 beta, 1 beta' and 1 omega subunit. When a sigma factor is associated with the core the holoenzyme is formed, which can initiate transcription.

The catalysed reaction is RNA(n) + a ribonucleoside 5'-triphosphate = RNA(n+1) + diphosphate. DNA-dependent RNA polymerase catalyzes the transcription of DNA into RNA using the four ribonucleoside triphosphates as substrates. In Pasteurella multocida (strain Pm70), this protein is DNA-directed RNA polymerase subunit beta.